Reading from the N-terminus, the 169-residue chain is Ecotin (169 aa).

An N-terminal signal peptide occupies residues 1–21 (MKKCSIILASVLLATSINAIA). C76 and C113 are disulfide-bonded.

The protein belongs to the protease inhibitor I11 (ecotin) family. In terms of assembly, homodimer.

It is found in the periplasm. In terms of biological role, general inhibitor of pancreatic serine proteases: inhibits chymotrypsin, trypsin, elastases, factor X, kallikrein as well as a variety of other proteases. The sequence is that of Ecotin from Yersinia pseudotuberculosis serotype O:1b (strain IP 31758).